The primary structure comprises 96 residues: Large ribosomal subunit protein bL28 (96 aa).

The interval methionine 1–alanine 21 is disordered.

It belongs to the bacterial ribosomal protein bL28 family.

The sequence is that of Large ribosomal subunit protein bL28 from Jannaschia sp. (strain CCS1).